Consider the following 902-residue polypeptide: Protein translocase subunit SecA (902 aa).

Residues Gln-87, 105–109, and Asp-512 each bind ATP; that span reads GEGKT. A disordered region spans residues 850-902; sequence RLAKQQQLSHEVTKESQMSAVDGQVASGKKVGRNEPCPCGSGKKYKHCHGKLG. Residues 853–868 show a composition bias toward polar residues; the sequence is KQQQLSHEVTKESQMS. The Zn(2+) site is built by Cys-886, Cys-888, Cys-897, and His-898. The segment covering 892–902 has biased composition (basic residues); sequence KKYKHCHGKLG.

Belongs to the SecA family. In terms of assembly, monomer and homodimer. Part of the essential Sec protein translocation apparatus which comprises SecA, SecYEG and auxiliary proteins SecDF-YajC and YidC. The cofactor is Zn(2+).

Its subcellular location is the cell inner membrane. It is found in the cytoplasm. The catalysed reaction is ATP + H2O + cellular proteinSide 1 = ADP + phosphate + cellular proteinSide 2.. Part of the Sec protein translocase complex. Interacts with the SecYEG preprotein conducting channel. Has a central role in coupling the hydrolysis of ATP to the transfer of proteins into and across the cell membrane, serving both as a receptor for the preprotein-SecB complex and as an ATP-driven molecular motor driving the stepwise translocation of polypeptide chains across the membrane. In Proteus mirabilis (strain HI4320), this protein is Protein translocase subunit SecA.